The sequence spans 222 residues: PLASMODESMATA CALLOSE-BINDING PROTEIN 4 (222 aa).

A signal peptide spans 1-19 (MSVLLPLCLIISMFTYSNA). Cysteine 22 and cysteine 83 are disulfide-bonded. Positions 88–187 (AASPSTTPPS…SVFPGTTLGP (100 aa)) are enriched in low complexity. The tract at residues 88–199 (AASPSTTPPS…SGGLGDPNAG (112 aa)) is disordered. The GPI-anchor amidated asparagine moiety is linked to residue asparagine 197. A propeptide spans 198 to 222 (AGEKLSVRTNTVVFLLTGVAAMLVI) (removed in mature form).

Post-translationally, contains two additional disulfide bonds.

The protein resides in the cell membrane. It localises to the cell junction. Its subcellular location is the plasmodesma. The chain is PLASMODESMATA CALLOSE-BINDING PROTEIN 4 (PDCB4) from Arabidopsis thaliana (Mouse-ear cress).